The sequence spans 482 residues: tRNA sulfurtransferase (482 aa).

A THUMP domain is found at 61–165 (AEVLEILTHT…GDKLNQVLAR (105 aa)). Residues 183-184 (LI), Lys-265, Gly-287, and Gln-296 contribute to the ATP site. Cys-344 and Cys-456 are joined by a disulfide. In terms of domain architecture, Rhodanese spans 404–482 (VEEHAVVLDI…GFNNVKVYRP (79 aa)). Catalysis depends on Cys-456, which acts as the Cysteine persulfide intermediate.

Belongs to the ThiI family.

The protein localises to the cytoplasm. It catalyses the reaction [ThiI sulfur-carrier protein]-S-sulfanyl-L-cysteine + a uridine in tRNA + 2 reduced [2Fe-2S]-[ferredoxin] + ATP + H(+) = [ThiI sulfur-carrier protein]-L-cysteine + a 4-thiouridine in tRNA + 2 oxidized [2Fe-2S]-[ferredoxin] + AMP + diphosphate. It carries out the reaction [ThiS sulfur-carrier protein]-C-terminal Gly-Gly-AMP + S-sulfanyl-L-cysteinyl-[cysteine desulfurase] + AH2 = [ThiS sulfur-carrier protein]-C-terminal-Gly-aminoethanethioate + L-cysteinyl-[cysteine desulfurase] + A + AMP + 2 H(+). The protein operates within cofactor biosynthesis; thiamine diphosphate biosynthesis. Functionally, catalyzes the ATP-dependent transfer of a sulfur to tRNA to produce 4-thiouridine in position 8 of tRNAs, which functions as a near-UV photosensor. Also catalyzes the transfer of sulfur to the sulfur carrier protein ThiS, forming ThiS-thiocarboxylate. This is a step in the synthesis of thiazole, in the thiamine biosynthesis pathway. The sulfur is donated as persulfide by IscS. The sequence is that of tRNA sulfurtransferase from Vibrio parahaemolyticus serotype O3:K6 (strain RIMD 2210633).